The following is a 180-amino-acid chain: O-acetyl-ADP-ribose deacetylase (180 aa).

Positions 1–175 constitute a Macro domain; it reads MKPQIDVIHG…LYQRLLTQRG (175 aa). Substrate-binding positions include 11-12, Asn25, 33-35, and 122-126; these read DI, GVD, and STGVY. Asp35 acts as the Proton acceptor in catalysis.

The protein belongs to the MacroD-type family. YmdB subfamily. Homodimer. Interacts with RNase III.

The catalysed reaction is 3''-O-acetyl-ADP-D-ribose + H2O = ADP-D-ribose + acetate + H(+). It catalyses the reaction 2''-O-acetyl-ADP-D-ribose + H2O = ADP-D-ribose + acetate + H(+). Deacetylates O-acetyl-ADP ribose to yield ADP-ribose and free acetate. Down-regulates ribonuclease 3 (RNase III) activity. Acts by interacting directly with the region of the ribonuclease that is required for dimerization/activation. The chain is O-acetyl-ADP-ribose deacetylase from Enterobacter cloacae subsp. cloacae (strain ATCC 13047 / DSM 30054 / NBRC 13535 / NCTC 10005 / WDCM 00083 / NCDC 279-56).